An 87-amino-acid polypeptide reads, in one-letter code: Small archaeal modifier protein 1 (87 aa).

The residue at position 87 (Gly87) is a 1-thioglycine; alternate. Gly87 bears the Glycyl adenylate; alternate mark. A Glycyl lysine isopeptide (Gly-Lys) (interchain with K-? in acceptor proteins); alternate cross-link involves residue Gly87.

In terms of processing, the C-terminal glycine is likely acyl-adenylated (-COAMP) by UbaA, and also probably thiocarboxylated (-COSH) to function in sulfur transfer.

In terms of biological role, functions as a protein modifier covalently attached to lysine residues of substrate proteins, as well as a sulfur carrier in molybdenum cofactor (MoCo) biosynthesis. The protein modification process is termed sampylation and involves the formation of an isopeptide bond between the SAMP1 C-terminal glycine carboxylate and the epsilon-amino group of lysine residues on target proteins. May serve as a proteolytic signal in the cell to target proteins for degradation by proteasomes. The protein is Small archaeal modifier protein 1 (samp1) of Haloferax volcanii (strain ATCC 29605 / DSM 3757 / JCM 8879 / NBRC 14742 / NCIMB 2012 / VKM B-1768 / DS2) (Halobacterium volcanii).